The chain runs to 4830 residues: Siderophore peptide synthetase fer3 (4830 aa).

The adenylation 1 stretch occupies residues 197 to 623 (LDQAEKFPDR…LGRMNAEQVK (427 aa)). The Carrier 1 domain maps to 751–833 (ANEDPVTQAL…DLIPLLSDTT (83 aa)). The residue at position 788 (Ser-788) is an O-(pantetheine 4'-phosphoryl)serine. Residues 879 to 1317 (QKIFPTTATQ…HSLMREPETT (439 aa)) are condensation 1. The segment at 1358-1781 (FENKAATEPE…IGRRDDLVKL (424 aa)) is adenylation 2. The Carrier 2 domain maps to 1929 to 2005 (GEDGDLQCQV…MLIRGLATKT (77 aa)). An O-(pantetheine 4'-phosphoryl)serine modification is found at Ser-1966. A condensation 2 region spans residues 2048-2503 (IPCSTLQEGM…LLDQVVSLLT (456 aa)). An adenylation 3 region spans residues 2573-2977 (AGTPETACIN…LGRRDEQEKI (405 aa)). In terms of domain architecture, Carrier 3 spans 3122–3198 (RPLSSLEREI…DIAAELSDSK (77 aa)). At Ser-3159 the chain carries O-(pantetheine 4'-phosphoryl)serine. The segment at 3232–3621 (KVLPCLPSQE…RDRDELRISA (390 aa)) is condensation 3. The Carrier 4 domain occupies 3685–3760 (TAAEEQIRDL…GLSKLLDQRQ (76 aa)). Ser-3720 is modified (O-(pantetheine 4'-phosphoryl)serine). The condensation 4 stretch occupies residues 3779 to 4199 (RYKATPLQAG…GVQIKAGASD (421 aa)). Residues 4264-4340 (SLSTAEQDIV…RLTVATETRS (77 aa)) form the Carrier 5 domain. Ser-4301 is modified (O-(pantetheine 4'-phosphoryl)serine). The condensation 5 stretch occupies residues 4381-4708 (VLPLLTGQQQ…DLVSRAEHQQ (328 aa)).

This sequence belongs to the NRP synthetase family.

Its pathway is siderophore biosynthesis. In terms of biological role, nonribosomal peptide synthetase; part of the gene cluster that mediates the biosynthesis of siderophore ferrichrome A which is contributing to organismal virulence. The first step of ferrichrome A biosynthesis is performed by the HMG-CoA synthase hcs1 which catalyzes the generation of HMG-CoA and CoA using acetoacetyl-CoA and acetyl-CoA as substrates. The enoyl-CoA isomerase/hydratase fer4 then catalyzes the conversion of hcs1-produced HMG-CoA to methylglutaconyl-CoA. The acyltransferase fer5 then fuses the fer4-generated methylglutaconyl-CoA with sid1-generated hydroxyornithine to yield methylglutaconyl hydroxyornithine. Methylglutaconyl hydroxyornithine is then available for use by the NRPS fer3 to generate ferrichrome A. This is Siderophore peptide synthetase fer3 from Mycosarcoma maydis (Corn smut fungus).